The following is a 309-amino-acid chain: L-aminoadipate-semialdehyde dehydrogenase-phosphopantetheinyl transferase (309 aa).

Residues arginine 47, 86 to 91, and 108 to 111 each bind CoA; these read RTSKGK and NISH. 2 residues coordinate Mg(2+): aspartate 129 and glutamate 181. 181 to 185 contacts CoA; that stretch reads ESFIK.

It belongs to the P-Pant transferase superfamily. AcpS family. As to quaternary structure, monomer. It depends on Mg(2+) as a cofactor.

Its subcellular location is the cytoplasm. It is found in the cytosol. The enzyme catalyses apo-[ACP] + CoA = holo-[ACP] + adenosine 3',5'-bisphosphate + H(+). The catalysed reaction is apo-[ACP] + acetyl-CoA = acetyl-[ACP] + adenosine 3',5'-bisphosphate + H(+). Catalyzes the post-translational modification of target proteins by phosphopantetheine. Can transfer the 4'-phosphopantetheine moiety from coenzyme A, regardless of whether the CoA is presented in the free thiol form or as an acetyl thioester, to a serine residue of a broad range of acceptors including the acyl carrier domain of FASN. In Rattus norvegicus (Rat), this protein is L-aminoadipate-semialdehyde dehydrogenase-phosphopantetheinyl transferase (Aasdhppt).